A 294-amino-acid chain; its full sequence is Cytidine deaminase (294 aa).

CMP/dCMP-type deaminase domains are found at residues 48–168 and 186–294; these read DEDA…FGPK and LTGD…VLLG. 89–91 is a substrate binding site; the sequence is NME. Residue His-102 coordinates Zn(2+). The Proton donor role is filled by Glu-104. Residues Cys-129 and Cys-132 each coordinate Zn(2+).

It belongs to the cytidine and deoxycytidylate deaminase family. In terms of assembly, homodimer. The cofactor is Zn(2+).

It carries out the reaction cytidine + H2O + H(+) = uridine + NH4(+). The catalysed reaction is 2'-deoxycytidine + H2O + H(+) = 2'-deoxyuridine + NH4(+). Its function is as follows. This enzyme scavenges exogenous and endogenous cytidine and 2'-deoxycytidine for UMP synthesis. This is Cytidine deaminase from Salmonella enteritidis PT4 (strain P125109).